A 1257-amino-acid polypeptide reads, in one-letter code: RAF-like serine/threonine-protein kinase 24 (1257 aa).

The tract at residues 1-21 is disordered; the sequence is MDQAKGYEHVRYTAPDPRDEG. Residues 191 to 277 form the PB1 domain; it reads PRDQKLRYVG…EKPRMFLFSS (87 aa). Basic and acidic residues-rich tracts occupy residues 457-480 and 493-502; these read VQDPETSSKEAKMRRDDSFQKVND and KEPKMRRESS. 2 disordered regions span residues 457-629 and 761-789; these read VQDP…RTSQ and SQSEKKNVETNTPEHVSQTETSAKAVPQG. The residue at position 474 (S474) is a Phosphoserine. Residues 533–548 show a composition bias toward low complexity; the sequence is TQTSSSTPDPSSSTLS. The segment covering 550 to 576 has biased composition (basic and acidic residues); the sequence is KSLRKSEDHVENNLSAKEPKMRKEHST. S555 is modified (phosphoserine). The segment covering 583 to 593 has biased composition (low complexity); sequence SVSSVSSDSMV. Residues 769 to 782 are compositionally biased toward polar residues; that stretch reads ETNTPEHVSQTETS. S777 carries the post-translational modification Phosphoserine. The Protein kinase domain occupies 974–1239; sequence LEELKELGSG…PEIARRLRTM (266 aa). ATP is bound by residues 980-988 and K1001; that span reads LGSGTFGTV. S1013 bears the Phosphoserine mark. The Proton acceptor role is filled by D1102.

It belongs to the protein kinase superfamily. Ser/Thr protein kinase family. Hyperphosphorylated in response to auxin in an ABP1- and TMK1-dependent manner.

The protein resides in the cytoplasm. It carries out the reaction L-seryl-[protein] + ATP = O-phospho-L-seryl-[protein] + ADP + H(+). It catalyses the reaction L-threonyl-[protein] + ATP = O-phospho-L-threonyl-[protein] + ADP + H(+). Activated by auxin via rapid phosphorylation downstream of ABP1 and TMK1 signaling. Its function is as follows. RAF-like protein kinase acting, together with RAF20, as a central mediator of a fast response pathway to auxin involving proteins phosphorylation, and leading to rapid cellular responses including membrane depolarization and cytoplasmic streaming. Required for general growth and developmental process. The polypeptide is RAF-like serine/threonine-protein kinase 24 (Arabidopsis thaliana (Mouse-ear cress)).